The following is a 461-amino-acid chain: UDP-N-acetylmuramate--L-alanine ligase (461 aa).

111-117 (GAHGKTT) is a binding site for ATP.

Belongs to the MurCDEF family.

It is found in the cytoplasm. It carries out the reaction UDP-N-acetyl-alpha-D-muramate + L-alanine + ATP = UDP-N-acetyl-alpha-D-muramoyl-L-alanine + ADP + phosphate + H(+). It functions in the pathway cell wall biogenesis; peptidoglycan biosynthesis. In terms of biological role, cell wall formation. The chain is UDP-N-acetylmuramate--L-alanine ligase from Pelotomaculum thermopropionicum (strain DSM 13744 / JCM 10971 / SI).